Consider the following 211-residue polypeptide: Urease accessory protein UreG (211 aa).

GTP is bound at residue 11–18 (GPVGAGKT).

Belongs to the SIMIBI class G3E GTPase family. UreG subfamily. Homodimer. UreD, UreF and UreG form a complex that acts as a GTP-hydrolysis-dependent molecular chaperone, activating the urease apoprotein by helping to assemble the nickel containing metallocenter of UreC. The UreE protein probably delivers the nickel.

The protein resides in the cytoplasm. Functionally, facilitates the functional incorporation of the urease nickel metallocenter. This process requires GTP hydrolysis, probably effectuated by UreG. This Actinobacillus pleuropneumoniae serotype 7 (strain AP76) protein is Urease accessory protein UreG.